Here is an 80-residue protein sequence, read N- to C-terminus: Protein UL148A (80 aa).

Residues 10 to 30 form a helical membrane-spanning segment; sequence WIPVCVVVVMTSVVLFAGLHV.

Its subcellular location is the host membrane. In terms of biological role, plays a role in the down-regulation of the host NKG2D ligand MICA by utilizing the lysosomal pathway for its degradation. In turn, MICA reduction diminishes NK-cell killing of HCMV-infected cells. This Human cytomegalovirus (strain Merlin) (HHV-5) protein is Protein UL148A (UL148A).